The primary structure comprises 431 residues: MTTIETTQGLERRVSITVPAETVTTAVRDELKRVAKNARVDGFRKGKVPAQIIEKRFGASVRQDVLNDLLPRHFFDLAFKEKVNLAGRPTFAVENYEEGKDLQFTATFEVYPEIQLQGLENIKVEKPVVEITDADVDNMVEVLRKQQATWAETDNAATKDDRVTIDFVGSIDGEEFQGGKANDFVLAMGQGRMIPGFEDGILGHKAGEQFDIEVTFPEDYHVENLKAKPAKFAITVKKVEVMVLPELTADFIAKFGPNTKTVDDLRAEIRKNMQRELKNALTARVKNQVIDGLIEQNQIDVPFAAVDQEIEVLRNQAAQRFGGNGEQAAQLPRELFEEQAKRRVQVGLLLAEVISSNELKADEEKAKAMIEDIASAYEQPAEVVEYYSKNNELMNNIRNVVLEEQAIDAVLAKAQVTEKASSFDEVMNPQA.

The PPIase FKBP-type domain maps to 160–245; that stretch reads DDRVTIDFVG…VKKVEVMVLP (86 aa).

The protein belongs to the FKBP-type PPIase family. Tig subfamily.

The protein localises to the cytoplasm. It catalyses the reaction [protein]-peptidylproline (omega=180) = [protein]-peptidylproline (omega=0). Involved in protein export. Acts as a chaperone by maintaining the newly synthesized protein in an open conformation. Functions as a peptidyl-prolyl cis-trans isomerase. The protein is Trigger factor of Mannheimia succiniciproducens (strain KCTC 0769BP / MBEL55E).